A 352-amino-acid chain; its full sequence is Lipid storage droplets surface-binding protein 2 (352 aa).

Disordered stretches follow at residues 1 to 28 and 298 to 352; these read MASA…DQPK and NVEQ…VSSQ. Polar residues predominate over residues 298-309; the sequence is NVEQSGGSSSDA. The span at 315 to 329 shows a compositional bias: low complexity; the sequence is TTTSTTTTTTTSSTS.

This sequence belongs to the perilipin family. Ubiquitous expression in early embryos. At stage 5 expression is restricted to the pole cells. At stage 11 expression is seen in the amnioserosa, refined to the fat body and midgut by stage 14. Also seen in the hindgut by the end of embryogenesis. Expression is seen in larval fat body (at protein level).

Its subcellular location is the cytoplasm. It is found in the lipid droplet. Its function is as follows. Essential for embryogenesis. Required for normal deposition of neutral lipids in the oocyte. This is Lipid storage droplets surface-binding protein 2 from Drosophila melanogaster (Fruit fly).